The chain runs to 775 residues: Semaphorin-3E (775 aa).

An N-terminal signal peptide occupies residues 1–25 (MASAGHIITLLLWGYLLELWTGGHT). The region spanning 32-516 (RLRLSHKELL…SASAVAQVRF (485 aa)) is the Sema domain. N-linked (GlcNAc...) asparagine glycosylation occurs at Asn-44. Cysteines 105 and 115 form a disulfide. Asn-126 carries an N-linked (GlcNAc...) asparagine glycan. Disulfide bonds link Cys-133/Cys-142, Cys-270/Cys-382, Cys-294/Cys-342, and Cys-519/Cys-537. A glycan (N-linked (GlcNAc...) asparagine) is linked at Asn-330. One can recognise an Ig-like C2-type domain in the interval 581–669 (ALDKTEEHLA…SFVHTVRKIT (89 aa)). Residues Asn-595 and Asn-596 are each glycosylated (N-linked (GlcNAc...) asparagine). An intrachain disulfide couples Cys-654 to Cys-729. Positions 742–775 (LKMSPSKWKYANPQEKKLRSKPEHYRLPRHTLDS) are disordered. Basic and acidic residues predominate over residues 755 to 775 (QEKKLRSKPEHYRLPRHTLDS).

The protein belongs to the semaphorin family. In terms of assembly, interacts with PLXND1.

The protein resides in the secreted. In terms of biological role, plays an important role in signaling via the cell surface receptor PLXND1. Mediates reorganization of the actin cytoskeleton, leading to the retraction of cell projections. Promotes focal adhesion disassembly and inhibits adhesion of endothelial cells to the extracellular matrix. Regulates angiogenesis, both during embryogenesis and after birth. Can down-regulate sprouting angiogenesis. Required for normal vascular patterning during embryogenesis. Plays an important role in ensuring the specificity of synapse formation. In Homo sapiens (Human), this protein is Semaphorin-3E (SEMA3E).